We begin with the raw amino-acid sequence, 90 residues long: Protein LURE 1.5 (90 aa).

A signal peptide spans 1–19; the sequence is MKLPIIFLTLLIFVSSCTS. Intrachain disulfides connect cysteine 58/cysteine 75 and cysteine 61/cysteine 82.

Belongs to the DEFL family. As to expression, expressed in the pistil. Detected exclusively in the synergid cells.

It is found in the secreted. Functionally, inactive pollen tube attractants guiding pollen tubes to the ovular micropyle. The sequence is that of Protein LURE 1.5 from Arabidopsis thaliana (Mouse-ear cress).